A 193-amino-acid chain; its full sequence is ATP-dependent Clp protease proteolytic subunit 2 (193 aa).

Ser-98 functions as the Nucleophile in the catalytic mechanism. His-123 is an active-site residue.

It belongs to the peptidase S14 family. Fourteen ClpP subunits assemble into 2 heptameric rings which stack back to back to give a disk-like structure with a central cavity, resembling the structure of eukaryotic proteasomes.

Its subcellular location is the cytoplasm. The catalysed reaction is Hydrolysis of proteins to small peptides in the presence of ATP and magnesium. alpha-casein is the usual test substrate. In the absence of ATP, only oligopeptides shorter than five residues are hydrolyzed (such as succinyl-Leu-Tyr-|-NHMec, and Leu-Tyr-Leu-|-Tyr-Trp, in which cleavage of the -Tyr-|-Leu- and -Tyr-|-Trp bonds also occurs).. Functionally, cleaves peptides in various proteins in a process that requires ATP hydrolysis. Has a chymotrypsin-like activity. Plays a major role in the degradation of misfolded proteins. The polypeptide is ATP-dependent Clp protease proteolytic subunit 2 (Bacillus anthracis).